The primary structure comprises 90 residues: Small ribosomal subunit protein bS16 (90 aa).

It belongs to the bacterial ribosomal protein bS16 family.

This chain is Small ribosomal subunit protein bS16, found in Streptococcus pneumoniae (strain Hungary19A-6).